A 195-amino-acid polypeptide reads, in one-letter code: MLKIGLTGGIGSGKSTVADLLSSEGFLIIDADQIAREIVEPGQPALAELVEAFGPEIIKEDGSLDRQGLAAKAFVDAEHTALLNSITHPRIAEETARRFAEAEANGTKVAIYDMPLLVDKGLDRGMDLVLVVDVNVEERVRRLVEKRGLGEKDVRRRIDSQVPDEVRLKAADVVIDNNGSLEDLKANMKNVIAEI.

A DPCK domain is found at 3–195 (KIGLTGGIGS…ANMKNVIAEI (193 aa)). Residue 11-16 (GSGKST) participates in ATP binding.

The protein belongs to the CoaE family.

The protein resides in the cytoplasm. It carries out the reaction 3'-dephospho-CoA + ATP = ADP + CoA + H(+). Its pathway is cofactor biosynthesis; coenzyme A biosynthesis; CoA from (R)-pantothenate: step 5/5. Its function is as follows. Catalyzes the phosphorylation of the 3'-hydroxyl group of dephosphocoenzyme A to form coenzyme A. The chain is Dephospho-CoA kinase from Corynebacterium glutamicum (Brevibacterium saccharolyticum).